The following is a 270-amino-acid chain: Gap junction beta-3 protein (270 aa).

Over 1–20 (MDWKTLQALLSGVNKYSTAF) the chain is Cytoplasmic. The chain crosses the membrane as a helical span at residues 21-40 (GRIWLSVVFVFRVLVYVVAA). Topologically, residues 41 to 75 (ERVWGDEQKDFDCNTKQPGCTNVCYDNYFPISNIR) are extracellular. A helical transmembrane segment spans residues 76-98 (LWALQLIFVTCPSLLVILHVAYR). The Cytoplasmic portion of the chain corresponds to 99 to 126 (EERERRHRQKHGDQCAKLYDNAGKKHGG). A helical transmembrane segment spans residues 127–149 (LWWTYLFSLIFKLIIEFLFLYLL). At 150 to 187 (HTLWHGFNMPRLVQCANVAPCPNIVDCYIARPTEKKIF) the chain is on the extracellular side. The helical transmembrane segment at 188–210 (TYFMVGASAVCIVLTICELCYLI) threads the bilayer. Topologically, residues 211 to 270 (CHRVLRGLHKDKPRGGCSPSSSASRASTCRCHHKLVEAGEVDPDPGNNKLQASAPNLTPI) are cytoplasmic. The disordered stretch occupies residues 250 to 270 (EVDPDPGNNKLQASAPNLTPI). Positions 258–270 (NKLQASAPNLTPI) are enriched in polar residues.

Belongs to the connexin family. Beta-type (group I) subfamily. As to quaternary structure, a connexon is composed of a hexamer of connexins. Interacts with CNST.

It is found in the cell membrane. The protein resides in the cell junction. It localises to the gap junction. Functionally, one gap junction consists of a cluster of closely packed pairs of transmembrane channels, the connexons, through which materials of low MW diffuse from one cell to a neighboring cell. The protein is Gap junction beta-3 protein (GJB3) of Homo sapiens (Human).